A 252-amino-acid chain; its full sequence is Ubiquinone biosynthesis O-methyltransferase (252 aa).

S-adenosyl-L-methionine-binding residues include Arg-36, Gly-60, Asp-81, and Leu-123.

It belongs to the methyltransferase superfamily. UbiG/COQ3 family.

It carries out the reaction a 3-demethylubiquinol + S-adenosyl-L-methionine = a ubiquinol + S-adenosyl-L-homocysteine + H(+). The enzyme catalyses a 3-(all-trans-polyprenyl)benzene-1,2-diol + S-adenosyl-L-methionine = a 2-methoxy-6-(all-trans-polyprenyl)phenol + S-adenosyl-L-homocysteine + H(+). It participates in cofactor biosynthesis; ubiquinone biosynthesis. O-methyltransferase that catalyzes the 2 O-methylation steps in the ubiquinone biosynthetic pathway. The sequence is that of Ubiquinone biosynthesis O-methyltransferase from Rickettsia prowazekii (strain Madrid E).